Consider the following 458-residue polypeptide: Tetratricopeptide repeat protein 23-like (458 aa).

2 coiled-coil regions span residues 175–198 (GKQA…LNNG) and 246–278 (TSEL…QAYS).

It localises to the cytoplasm. Its subcellular location is the cytoskeleton. The protein localises to the microtubule organizing center. It is found in the centrosome. The protein resides in the spindle. It localises to the midbody. This chain is Tetratricopeptide repeat protein 23-like (Ttc23l), found in Mus musculus (Mouse).